A 149-amino-acid chain; its full sequence is Large ribosomal subunit protein uL13 (149 aa).

Belongs to the universal ribosomal protein uL13 family. Part of the 50S ribosomal subunit.

Functionally, this protein is one of the early assembly proteins of the 50S ribosomal subunit, although it is not seen to bind rRNA by itself. It is important during the early stages of 50S assembly. The sequence is that of Large ribosomal subunit protein uL13 from Bifidobacterium adolescentis (strain ATCC 15703 / DSM 20083 / NCTC 11814 / E194a).